Reading from the N-terminus, the 513-residue chain is Sulfhydryl oxidase 1 (513 aa).

The first 30 residues, methionine 1–alanine 30, serve as a signal peptide directing secretion. One can recognise a Thioredoxin domain in the interval arginine 31–lysine 174. An N-linked (GlcNAc...) asparagine glycan is attached at asparagine 51. Active-site nucleophile residues include cysteine 76 and cysteine 79. The cysteines at positions 76 and 79 are disulfide-linked. 2 N-linked (GlcNAc...) asparagine glycosylation sites follow: asparagine 193 and asparagine 266. A disulfide bridge links cysteine 301 with cysteine 313. Positions serine 304–tryptophan 406 constitute an ERV/ALR sulfhydryl oxidase domain. FAD contacts are provided by residues arginine 309, tryptophan 316, histidine 320, glutamate 350, histidine 354, tryptophan 377–asparagine 384, lysine 403, and tryptophan 406. Cysteine 348 and cysteine 351 are disulfide-bonded. Cysteine 412 and cysteine 415 are joined by a disulfide.

It depends on FAD as a cofactor.

It localises to the secreted. The enzyme catalyses 2 R'C(R)SH + O2 = R'C(R)S-S(R)CR' + H2O2. In terms of biological role, catalyzes the oxidation of sulfhydryl groups in peptide and protein thiols to disulfides with the reduction of oxygen to hydrogen peroxide. May contribute to disulfide bond formation in a variety of secreted proteins. This Oryza sativa subsp. japonica (Rice) protein is Sulfhydryl oxidase 1 (QSOX1).